Reading from the N-terminus, the 558-residue chain is Dihydroxy-acid dehydratase (558 aa).

Residue Asp-81 participates in Mg(2+) binding. [2Fe-2S] cluster is bound at residue Cys-122. Asp-123 and Lys-124 together coordinate Mg(2+). Residue Lys-124 is modified to N6-carboxylysine. Cys-195 provides a ligand contact to [2Fe-2S] cluster. Glu-447 serves as a coordination point for Mg(2+). Ser-473 functions as the Proton acceptor in the catalytic mechanism.

Belongs to the IlvD/Edd family. As to quaternary structure, homodimer. [2Fe-2S] cluster serves as cofactor. Requires Mg(2+) as cofactor.

The catalysed reaction is (2R)-2,3-dihydroxy-3-methylbutanoate = 3-methyl-2-oxobutanoate + H2O. It catalyses the reaction (2R,3R)-2,3-dihydroxy-3-methylpentanoate = (S)-3-methyl-2-oxopentanoate + H2O. The protein operates within amino-acid biosynthesis; L-isoleucine biosynthesis; L-isoleucine from 2-oxobutanoate: step 3/4. It functions in the pathway amino-acid biosynthesis; L-valine biosynthesis; L-valine from pyruvate: step 3/4. In terms of biological role, functions in the biosynthesis of branched-chain amino acids. Catalyzes the dehydration of (2R,3R)-2,3-dihydroxy-3-methylpentanoate (2,3-dihydroxy-3-methylvalerate) into 2-oxo-3-methylpentanoate (2-oxo-3-methylvalerate) and of (2R)-2,3-dihydroxy-3-methylbutanoate (2,3-dihydroxyisovalerate) into 2-oxo-3-methylbutanoate (2-oxoisovalerate), the penultimate precursor to L-isoleucine and L-valine, respectively. This Bacillus velezensis (strain DSM 23117 / BGSC 10A6 / LMG 26770 / FZB42) (Bacillus amyloliquefaciens subsp. plantarum) protein is Dihydroxy-acid dehydratase.